The sequence spans 188 residues: Elongation factor P-like protein (188 aa).

This sequence belongs to the elongation factor P family.

The protein is Elongation factor P-like protein of Xanthomonas euvesicatoria pv. vesicatoria (strain 85-10) (Xanthomonas campestris pv. vesicatoria).